A 418-amino-acid chain; its full sequence is 3-isopropylmalate dehydratase large subunit (418 aa).

[4Fe-4S] cluster-binding residues include Cys-297, Cys-357, and Cys-360.

The protein belongs to the aconitase/IPM isomerase family. LeuC type 2 subfamily. Heterodimer of LeuC and LeuD. [4Fe-4S] cluster serves as cofactor.

The enzyme catalyses (2R,3S)-3-isopropylmalate = (2S)-2-isopropylmalate. It functions in the pathway amino-acid biosynthesis; L-leucine biosynthesis; L-leucine from 3-methyl-2-oxobutanoate: step 2/4. Functionally, catalyzes the isomerization between 2-isopropylmalate and 3-isopropylmalate, via the formation of 2-isopropylmaleate. This is 3-isopropylmalate dehydratase large subunit from Elusimicrobium minutum (strain Pei191).